Reading from the N-terminus, the 230-residue chain is Phosphoribosylformylglycinamidine synthase subunit PurQ (230 aa).

A Glutamine amidotransferase type-1 domain is found at 2–226; sequence RVAVIVFPGS…LKTWREQNSV (225 aa). Cysteine 86 acts as the Nucleophile in catalysis. Catalysis depends on residues histidine 195 and glutamate 197.

Part of the FGAM synthase complex composed of 1 PurL, 1 PurQ and 2 PurS subunits.

Its subcellular location is the cytoplasm. The enzyme catalyses N(2)-formyl-N(1)-(5-phospho-beta-D-ribosyl)glycinamide + L-glutamine + ATP + H2O = 2-formamido-N(1)-(5-O-phospho-beta-D-ribosyl)acetamidine + L-glutamate + ADP + phosphate + H(+). It catalyses the reaction L-glutamine + H2O = L-glutamate + NH4(+). Its pathway is purine metabolism; IMP biosynthesis via de novo pathway; 5-amino-1-(5-phospho-D-ribosyl)imidazole from N(2)-formyl-N(1)-(5-phospho-D-ribosyl)glycinamide: step 1/2. Part of the phosphoribosylformylglycinamidine synthase complex involved in the purines biosynthetic pathway. Catalyzes the ATP-dependent conversion of formylglycinamide ribonucleotide (FGAR) and glutamine to yield formylglycinamidine ribonucleotide (FGAM) and glutamate. The FGAM synthase complex is composed of three subunits. PurQ produces an ammonia molecule by converting glutamine to glutamate. PurL transfers the ammonia molecule to FGAR to form FGAM in an ATP-dependent manner. PurS interacts with PurQ and PurL and is thought to assist in the transfer of the ammonia molecule from PurQ to PurL. The polypeptide is Phosphoribosylformylglycinamidine synthase subunit PurQ (Brevibacillus brevis (strain 47 / JCM 6285 / NBRC 100599)).